The primary structure comprises 517 residues: UPF0522 protein B (517 aa).

Positions 1 to 19 (MNKTIILLLISIIFEIVIS) are cleaved as a signal peptide. N-linked (GlcNAc...) asparagine glycosylation is found at Asn-148, Asn-245, Asn-333, Asn-345, Asn-370, Asn-423, Asn-432, and Asn-495.

Belongs to the UPF0522 family.

The protein resides in the secreted. The polypeptide is UPF0522 protein B (Dictyostelium discoideum (Social amoeba)).